Here is a 160-residue protein sequence, read N- to C-terminus: E3 ubiquitin ligase complex SCF subunit sconC (160 aa).

The segment at 101–160 is interaction with the F-box domain of F-box proteins; it reads ILAANYLDIKALLDVGCKTVANMIKGKSPEEIRKTFNIQNDFTPEEEDQIRRENEWAEDR.

It belongs to the SKP1 family. As to quaternary structure, component of the SCF (SKP1-CUL1-F-box protein) E3 ubiquitin ligase complexes.

It participates in protein modification; protein ubiquitination. In terms of biological role, essential component of the SCF (SKP1-CUL1-F-box protein) E3 ubiquitin ligase complexes, which mediate the ubiquitination and subsequent proteasomal degradation of target proteins. Controls sulfur metabolite repression, probably by mediating the inactivation or degradation of the metR transcription factor. The sequence is that of E3 ubiquitin ligase complex SCF subunit sconC (sconC) from Talaromyces marneffei (strain ATCC 18224 / CBS 334.59 / QM 7333) (Penicillium marneffei).